The chain runs to 739 residues: Phosphoribosylformylglycinamidine synthase subunit PurL (739 aa).

Histidine 54 is a catalytic residue. Positions 57 and 96 each coordinate ATP. Glutamate 98 lines the Mg(2+) pocket. Substrate is bound by residues 99 to 102 and arginine 121; that span reads SHNH. The active-site Proton acceptor is histidine 100. A Mg(2+)-binding site is contributed by aspartate 122. Glutamine 245 lines the substrate pocket. A Mg(2+)-binding site is contributed by aspartate 273. 317-319 contacts substrate; that stretch reads ESQ. Positions 500 and 537 each coordinate ATP. Mg(2+) is bound at residue asparagine 538. Serine 540 is a substrate binding site.

This sequence belongs to the FGAMS family. Monomer. Part of the FGAM synthase complex composed of 1 PurL, 1 PurQ and 2 PurS subunits.

Its subcellular location is the cytoplasm. It carries out the reaction N(2)-formyl-N(1)-(5-phospho-beta-D-ribosyl)glycinamide + L-glutamine + ATP + H2O = 2-formamido-N(1)-(5-O-phospho-beta-D-ribosyl)acetamidine + L-glutamate + ADP + phosphate + H(+). The protein operates within purine metabolism; IMP biosynthesis via de novo pathway; 5-amino-1-(5-phospho-D-ribosyl)imidazole from N(2)-formyl-N(1)-(5-phospho-D-ribosyl)glycinamide: step 1/2. In terms of biological role, part of the phosphoribosylformylglycinamidine synthase complex involved in the purines biosynthetic pathway. Catalyzes the ATP-dependent conversion of formylglycinamide ribonucleotide (FGAR) and glutamine to yield formylglycinamidine ribonucleotide (FGAM) and glutamate. The FGAM synthase complex is composed of three subunits. PurQ produces an ammonia molecule by converting glutamine to glutamate. PurL transfers the ammonia molecule to FGAR to form FGAM in an ATP-dependent manner. PurS interacts with PurQ and PurL and is thought to assist in the transfer of the ammonia molecule from PurQ to PurL. This Bacillus cytotoxicus (strain DSM 22905 / CIP 110041 / 391-98 / NVH 391-98) protein is Phosphoribosylformylglycinamidine synthase subunit PurL.